Here is a 255-residue protein sequence, read N- to C-terminus: Hydroxyacylglutathione hydrolase (255 aa).

Zn(2+) contacts are provided by His-56, His-58, Asp-60, His-61, His-114, Asp-133, and His-171.

It belongs to the metallo-beta-lactamase superfamily. Glyoxalase II family. In terms of assembly, monomer. Zn(2+) serves as cofactor.

The enzyme catalyses an S-(2-hydroxyacyl)glutathione + H2O = a 2-hydroxy carboxylate + glutathione + H(+). The protein operates within secondary metabolite metabolism; methylglyoxal degradation; (R)-lactate from methylglyoxal: step 2/2. Its function is as follows. Thiolesterase that catalyzes the hydrolysis of S-D-lactoyl-glutathione to form glutathione and D-lactic acid. This chain is Hydroxyacylglutathione hydrolase, found in Mesorhizobium japonicum (strain LMG 29417 / CECT 9101 / MAFF 303099) (Mesorhizobium loti (strain MAFF 303099)).